Consider the following 203-residue polypeptide: Glycerol-3-phosphate acyltransferase (203 aa).

6 helical membrane passes run I3–S23, K51–V71, F74–L94, A116–F136, S140–T160, and P164–W178.

It belongs to the PlsY family. Probably interacts with PlsX.

The protein resides in the cell inner membrane. It carries out the reaction an acyl phosphate + sn-glycerol 3-phosphate = a 1-acyl-sn-glycero-3-phosphate + phosphate. Its pathway is lipid metabolism; phospholipid metabolism. Functionally, catalyzes the transfer of an acyl group from acyl-phosphate (acyl-PO(4)) to glycerol-3-phosphate (G3P) to form lysophosphatidic acid (LPA). This enzyme utilizes acyl-phosphate as fatty acyl donor, but not acyl-CoA or acyl-ACP. This is Glycerol-3-phosphate acyltransferase from Burkholderia pseudomallei (strain 1710b).